Here is a 163-residue protein sequence, read N- to C-terminus: Probable cobalt-precorrin-6B C(15)-methyltransferase (decarboxylating) (163 aa).

Residues Thr-6, 30-34 (GCGSG), Asp-51, and Gly-75 each bind S-adenosyl-L-methionine.

The protein belongs to the methyltransferase superfamily. Archaeal-type CbiT family.

It catalyses the reaction Co-precorrin-6B + S-adenosyl-L-methionine = Co-precorrin-7 + S-adenosyl-L-homocysteine + CO2. It functions in the pathway cofactor biosynthesis; adenosylcobalamin biosynthesis; cob(II)yrinate a,c-diamide from sirohydrochlorin (anaerobic route): step 8/10. Its function is as follows. Catalyzes the methylation of C-15 in cobalt-precorrin-6B followed by the decarboxylation of C-12 to form cobalt-precorrin-7. This chain is Probable cobalt-precorrin-6B C(15)-methyltransferase (decarboxylating), found in Archaeoglobus fulgidus (strain ATCC 49558 / DSM 4304 / JCM 9628 / NBRC 100126 / VC-16).